The primary structure comprises 227 residues: Esterase OVCA2 (227 aa).

Catalysis depends on charge relay system residues Ser-119, Asp-179, and His-206.

Belongs to the LovG family.

It catalyses the reaction a carboxylic ester + H2O = an alcohol + a carboxylate + H(+). In terms of biological role, exhibits ester hydrolase activity with a strong preference for long-chain alkyl ester substrates and high selectivity against a variety of short, branched, and substituted esters. Is able to hydrolyze ester bonds within a wide range of p-nitrophenyl derivatives (C2-C14) in vitro, with a strong preference toward substrates of &gt;8 carbons. The protein is Esterase OVCA2 (OVCA2) of Bos taurus (Bovine).